Reading from the N-terminus, the 107-residue chain is Small leucine-rich protein 1 (107 aa).

2 consecutive transmembrane segments (helical) span residues 19-39 (AALV…LAMS) and 53-73 (FLFF…IAYF). Positions 85–107 (SQNCDRQHNPKDGSSLYQRMKWT) are disordered.

Its subcellular location is the membrane. This is Small leucine-rich protein 1 (SMLR1) from Homo sapiens (Human).